The primary structure comprises 305 residues: tRNA dimethylallyltransferase 1 (305 aa).

ATP is bound at residue 10–17 (GPTASGKT). 12–17 (TASGKT) provides a ligand contact to substrate. An interaction with substrate tRNA region spans residues 35–38 (DSRQ).

The protein belongs to the IPP transferase family. As to quaternary structure, monomer. Requires Mg(2+) as cofactor.

The catalysed reaction is adenosine(37) in tRNA + dimethylallyl diphosphate = N(6)-dimethylallyladenosine(37) in tRNA + diphosphate. In terms of biological role, catalyzes the transfer of a dimethylallyl group onto the adenine at position 37 in tRNAs that read codons beginning with uridine, leading to the formation of N6-(dimethylallyl)adenosine (i(6)A). The sequence is that of tRNA dimethylallyltransferase 1 from Syntrophus aciditrophicus (strain SB).